The chain runs to 95 residues: uncharacterized protein (95 aa).

Residues 14–50 (KMEQKLQEQLDGLLEKYTELLLGETNDELKEEVKQWI) adopt a coiled-coil conformation.

This is an uncharacterized protein from Bacillus subtilis (strain 168).